The following is a 476-amino-acid chain: 3-isopropylmalate dehydratase large subunit (476 aa).

3 residues coordinate [4Fe-4S] cluster: C357, C417, and C420.

Belongs to the aconitase/IPM isomerase family. LeuC type 1 subfamily. Heterodimer of LeuC and LeuD. [4Fe-4S] cluster is required as a cofactor.

The enzyme catalyses (2R,3S)-3-isopropylmalate = (2S)-2-isopropylmalate. The protein operates within amino-acid biosynthesis; L-leucine biosynthesis; L-leucine from 3-methyl-2-oxobutanoate: step 2/4. Functionally, catalyzes the isomerization between 2-isopropylmalate and 3-isopropylmalate, via the formation of 2-isopropylmaleate. The protein is 3-isopropylmalate dehydratase large subunit of Mycobacterium leprae (strain TN).